Consider the following 150-residue polypeptide: Large ribosomal subunit protein uL22c (150 aa).

It belongs to the universal ribosomal protein uL22 family. As to quaternary structure, part of the 50S ribosomal subunit.

The protein resides in the plastid. Functionally, this protein binds specifically to 23S rRNA. Its function is as follows. The globular domain of the protein is located near the polypeptide exit tunnel on the outside of the subunit, while an extended beta-hairpin is found that lines the wall of the exit tunnel in the center of the 70S ribosome. The polypeptide is Large ribosomal subunit protein uL22c (rpl22) (Orobanche minor (Small broomrape)).